Reading from the N-terminus, the 230-residue chain is MALGKRLKKAREGVDRTKLYPLADAIKMIKERATSKFDETIEVAINLGVDPRHADQMVRGVVMLPNGTGRTLRVGVFARGAKAEEAKAAGADVVGAEDLVEKVQNGNIDFDRCIATPDMMPLVGRLGKVLGPRGMMPNPKIGTVTMDVTGAVKGAKGGSVEFRVEKAGIIQAGVGKASFTEDKLVENIKALADAVVKAKPAGAKGTYVQRVAVSSTMGPGVKVEPGTVLA.

This sequence belongs to the universal ribosomal protein uL1 family. Part of the 50S ribosomal subunit.

In terms of biological role, binds directly to 23S rRNA. The L1 stalk is quite mobile in the ribosome, and is involved in E site tRNA release. Protein L1 is also a translational repressor protein, it controls the translation of the L11 operon by binding to its mRNA. This chain is Large ribosomal subunit protein uL1, found in Bradyrhizobium sp. (strain ORS 278).